The primary structure comprises 338 residues: Flap endonuclease 1 (338 aa).

An N-domain region spans residues 1–98 (MGTDIGDLLQ…ETLSRRKEVR (98 aa)). Positions 27, 80, 152, 154, 173, 175, and 236 each coordinate Mg(2+). Positions 116 to 257 (AAYKYAQASS…TALKLIKKHG (142 aa)) are I-domain. Residues 330-338 (RQKTLDQWF) are interaction with PCNA.

Belongs to the XPG/RAD2 endonuclease family. FEN1 subfamily. In terms of assembly, interacts with PCNA. PCNA stimulates the nuclease activity without altering cleavage specificity. Requires Mg(2+) as cofactor.

Functionally, structure-specific nuclease with 5'-flap endonuclease and 5'-3' exonuclease activities involved in DNA replication and repair. During DNA replication, cleaves the 5'-overhanging flap structure that is generated by displacement synthesis when DNA polymerase encounters the 5'-end of a downstream Okazaki fragment. Binds the unpaired 3'-DNA end and kinks the DNA to facilitate 5' cleavage specificity. Cleaves one nucleotide into the double-stranded DNA from the junction in flap DNA, leaving a nick for ligation. Also involved in the base excision repair (BER) pathway. Acts as a genome stabilization factor that prevents flaps from equilibrating into structures that lead to duplications and deletions. Also possesses 5'-3' exonuclease activity on nicked or gapped double-stranded DNA. The sequence is that of Flap endonuclease 1 from Methanosarcina acetivorans (strain ATCC 35395 / DSM 2834 / JCM 12185 / C2A).